A 120-amino-acid polypeptide reads, in one-letter code: Spermidine export protein MdtJ (120 aa).

4 helical membrane-spanning segments follow: residues 1–21 (MFYWILLALAIVAEITGTLSM), 31–51 (AGYILMLVMITLSYIFLSFAV), 54–74 (IALGVAYALWEGIGILFITVF), and 81–101 (EVLSTMKIVGLLTLIVGIVLI).

It belongs to the drug/metabolite transporter (DMT) superfamily. Small multidrug resistance (SMR) (TC 2.A.7.1) family. MdtJ subfamily. As to quaternary structure, forms a complex with MdtI.

The protein localises to the cell inner membrane. Catalyzes the excretion of spermidine. The protein is Spermidine export protein MdtJ of Salmonella arizonae (strain ATCC BAA-731 / CDC346-86 / RSK2980).